We begin with the raw amino-acid sequence, 179 residues long: Lebocin-1/2 (179 aa).

Residues 1–16 (MYKFLVFSSVLVLFFA) form the signal peptide. The propeptide occupies 17 to 120 (QASCQRFIQP…QPIESHRNTR (104 aa)). Positions 93–116 (NNEASIEHSHHTVDTGLDQPIESH) are disordered. Thr-135 carries an O-linked (GalNAc...) threonine glycan. The propeptide occupies 153 to 179 (RRHASDDQEELRQYNEHFLIPRDIFQE).

It belongs to the lebocin family. O-glycosylation is important for the antibacterial activity of lebocin, O-linked glycan structure is a disaccharide (Gal-GalNAc) in case of lebocin 1 and a monosaccharide (GalNAc) in case of lebocin 2. Hemolymph. Produced in fat body.

The protein resides in the secreted. In terms of biological role, antibacterial peptide. The polypeptide is Lebocin-1/2 (Bombyx mori (Silk moth)).